The chain runs to 2240 residues: Nonribisomal peptide synthetase notE (2240 aa).

Residues 22–52 (TETMRETLSSSSSPLSLSSITSPLSSASEPP) are disordered. Residues 28–52 (TLSSSSSPLSLSSITSPLSSASEPP) show a composition bias toward low complexity. The tract at residues 85–484 (QQRCREAPES…GRKEGQVKIR (400 aa)) is adenylation 1. A Carrier 1 domain is found at 616 to 692 (PPTTATEHAL…EQARKATPVS (77 aa)). Residue S653 is modified to O-(pantetheine 4'-phosphoryl)serine. Residues 732-1144 (EDIFPCTPLQ…DFASPQDRDL (413 aa)) form a condensation 1 region. The tract at residues 1167–1564 (QEARQPSREA…GRRDTQLKLR (398 aa)) is adenylation 2. The Carrier 2 domain occupies 1700–1776 (PVSRGPELRL…ELARCTGEEP (77 aa)). S1737 bears the O-(pantetheine 4'-phosphoryl)serine mark. A condensation 2 region spans residues 1845–2159 (FSFHGEVSVE…ILQHQNIDMD (315 aa)). Residues 2008 to 2027 (CTMPVKATPPTDSDDSRPSA) form a disordered region.

The protein belongs to the NRP synthetase family.

The catalysed reaction is L-proline + L-tryptophan + 2 ATP = brevianamide F + 2 AMP + 2 diphosphate + 2 H(+). It participates in alkaloid biosynthesis. Nonribisomal peptide synthetase; part of the gene cluster that mediates the biosynthesis of notoamide, a fungal indole alkaloid that belongs to a family of natural products containing a characteristic bicyclo[2.2.2]diazaoctane core. The first step of notoamide biosynthesis involves coupling of L-proline and L-tryptophan by the bimodular NRPS notE, to produce cyclo-L-tryptophan-L-proline called brevianamide F. The reverse prenyltransferase notF then acts as a deoxybrevianamide E synthase and converts brevianamide F to deoxybrevianamide E via reverse prenylation at C-2 of the indole ring leading to the bicyclo[2.2.2]diazaoctane core. Deoxybrevianamide E is further hydroxylated at C-6 of the indole ring, likely catalyzed by the cytochrome P450 monooxygenase notG, to yield 6-hydroxy-deoxybrevianamide E. 6-hydroxy-deoxybrevianamide E is a specific substrate of the prenyltransferase notC for normal prenylation at C-7 to produce 6-hydroxy-7-prenyl-deoxybrevianamide, also called notoamide S. As the proposed pivotal branching point in notoamide biosynthesis, notoamide S can be diverted to notoamide E through an oxidative pyran ring closure putatively catalyzed by either notH cytochrome P450 monooxygenase or the notD FAD-linked oxidoreductase. This step would be followed by an indole 2,3-epoxidation-initiated pinacol-like rearrangement catalyzed by the notB FAD-dependent monooxygenase leading to the formation of notoamide C and notoamide D. On the other hand notoamide S is converted to notoamide T by notH (or notD), a bifunctional oxidase that also functions as the intramolecular Diels-Alderase responsible for generation of (+)-notoamide T. To generate antipodal (-)-notoaminide T, notH' (or notD') in Aspergillus versicolor is expected to catalyze a Diels-Alder reaction leading to the opposite stereochemistry. The remaining oxidoreductase notD (or notH) likely catalyzes the oxidative pyran ring formation to yield (+)-stephacidin A. The FAD-dependent monooxygenase notI is highly similar to notB and is predicted to catalyze a similar conversion from (+)-stephacidin A to (-)-notoamide B via the 2,3-epoxidation of (+)-stephacidin A followed by a pinacol-type rearrangement. Finally, it remains unclear which enzyme could be responsible for the final hydroxylation steps leading to notoamide A and sclerotiamide. In Aspergillus sp. (strain MF297-2), this protein is Nonribisomal peptide synthetase notE.